We begin with the raw amino-acid sequence, 110 residues long: Ribonuclease P protein component 4 (110 aa).

Zn(2+) contacts are provided by C65, C68, C94, and C97.

The protein belongs to the eukaryotic/archaeal RNase P protein component 4 family. Consists of a catalytic RNA component and at least 4-5 protein subunits. It depends on Zn(2+) as a cofactor.

The protein localises to the cytoplasm. The enzyme catalyses Endonucleolytic cleavage of RNA, removing 5'-extranucleotides from tRNA precursor.. Its function is as follows. Part of ribonuclease P, a protein complex that generates mature tRNA molecules by cleaving their 5'-ends. This is Ribonuclease P protein component 4 from Methanococcus maripaludis (strain C7 / ATCC BAA-1331).